The sequence spans 375 residues: Dual-specificity RNA methyltransferase RlmN (375 aa).

The active-site Proton acceptor is the E93. Positions 99–346 (ETNRGTLCVS…TTTRKTRGDD (248 aa)) constitute a Radical SAM core domain. C106 and C351 are disulfide-bonded. The [4Fe-4S] cluster site is built by C113, C117, and C120. S-adenosyl-L-methionine-binding positions include 177–178 (GE), S209, 231–233 (SLH), and N308. C351 (S-methylcysteine intermediate) is an active-site residue.

The protein belongs to the radical SAM superfamily. RlmN family. The cofactor is [4Fe-4S] cluster.

The protein localises to the cytoplasm. It catalyses the reaction adenosine(2503) in 23S rRNA + 2 reduced [2Fe-2S]-[ferredoxin] + 2 S-adenosyl-L-methionine = 2-methyladenosine(2503) in 23S rRNA + 5'-deoxyadenosine + L-methionine + 2 oxidized [2Fe-2S]-[ferredoxin] + S-adenosyl-L-homocysteine. It carries out the reaction adenosine(37) in tRNA + 2 reduced [2Fe-2S]-[ferredoxin] + 2 S-adenosyl-L-methionine = 2-methyladenosine(37) in tRNA + 5'-deoxyadenosine + L-methionine + 2 oxidized [2Fe-2S]-[ferredoxin] + S-adenosyl-L-homocysteine. Specifically methylates position 2 of adenine 2503 in 23S rRNA and position 2 of adenine 37 in tRNAs. m2A2503 modification seems to play a crucial role in the proofreading step occurring at the peptidyl transferase center and thus would serve to optimize ribosomal fidelity. The chain is Dual-specificity RNA methyltransferase RlmN from Azoarcus sp. (strain BH72).